The primary structure comprises 200 residues: Putative protein ATXN8OS (200 aa).

Residues 19 to 39 (PFSGLKEEEEEDGEDDEEEEE) form a disordered region. Acidic residues predominate over residues 25–39 (EEEEEDGEDDEEEEE).

In terms of tissue distribution, expressed in brain. Expressed in muscle tissues (at protein level).

It localises to the cytoplasm. The sequence is that of Putative protein ATXN8OS from Homo sapiens (Human).